The sequence spans 256 residues: Protein FixA (256 aa).

This sequence belongs to the ETF beta-subunit/FixA family. Heterodimer of FixA and FixB.

The protein operates within amine and polyamine metabolism; carnitine metabolism. Required for anaerobic carnitine reduction. May bring reductant to CaiA. This is Protein FixA from Shigella flexneri serotype 5b (strain 8401).